The following is a 189-amino-acid chain: MLLGQLSTLLCLLSGALPTGSGRPEPQSPRPQSWAAANQTWALGPGALPPLVPASALGSWKAFLGLQKARQLGMGRLQRGQDEVAAVTLPLNPQEVIQGMCKAVPFVQVFSRPGCSAIRLRNHLCFGHCSSLYIPGSDPTPLVLCNSCMPARKRWAPVVLWCLTGSSASRRRVKISTMLIEGCHCSPKA.

The first 22 residues, 1–22 (MLLGQLSTLLCLLSGALPTGSG), serve as a signal peptide directing secretion. Residue Asn-38 is glycosylated (N-linked (GlcNAc...) asparagine). 4 disulfides stabilise this stretch: Cys-101–Cys-148, Cys-115–Cys-162, Cys-125–Cys-183, and Cys-129–Cys-185. Positions 101–186 (CKAVPFVQVF…TMLIEGCHCS (86 aa)) constitute a CTCK domain.

The protein belongs to the DAN family. As to expression, expressed in the retina, in inner segments of photoreceptors, at or close to the outer plexiform layer and in the ganglion cell layer (at protein level).

It localises to the secreted. Its function is as follows. Antagonist of the extracellular signaling protein NODAL, which is required for correct left-right patterning during embryonic development. Antagonist of BMP and TGF-beta signaling. Independently of its role in left-right axis establishment, plays a role during heart development, possibly through the regulation of TGF-beta/Nodal signaling pathway. Displays anti-angiogenic activity by inhibiting endothelial sprouting, migration, and proliferation. Once internalized by endothelial cells, may alter their redox and glycolytic balance. In Homo sapiens (Human), this protein is DAN domain family member 5 (DAND5).